The chain runs to 339 residues: Ketol-acid reductoisomerase (NADP(+)) (339 aa).

Positions 1-182 (MRVYYDRDAD…GGGRAGVIET (182 aa)) constitute a KARI N-terminal Rossmann domain. Residues 24–27 (YGSQ), R48, S51, T53, and 83–86 (DELQ) each bind NADP(+). H108 is an active-site residue. G134 is a binding site for NADP(+). Residues 183 to 328 (TFKEECETDL…KKLRSMMPWI (146 aa)) enclose the KARI C-terminal knotted domain. Mg(2+) contacts are provided by D191, E195, E227, and E231. A substrate-binding site is contributed by S252.

Belongs to the ketol-acid reductoisomerase family. It depends on Mg(2+) as a cofactor.

It catalyses the reaction (2R)-2,3-dihydroxy-3-methylbutanoate + NADP(+) = (2S)-2-acetolactate + NADPH + H(+). The enzyme catalyses (2R,3R)-2,3-dihydroxy-3-methylpentanoate + NADP(+) = (S)-2-ethyl-2-hydroxy-3-oxobutanoate + NADPH + H(+). It functions in the pathway amino-acid biosynthesis; L-isoleucine biosynthesis; L-isoleucine from 2-oxobutanoate: step 2/4. It participates in amino-acid biosynthesis; L-valine biosynthesis; L-valine from pyruvate: step 2/4. In terms of biological role, involved in the biosynthesis of branched-chain amino acids (BCAA). Catalyzes an alkyl-migration followed by a ketol-acid reduction of (S)-2-acetolactate (S2AL) to yield (R)-2,3-dihydroxy-isovalerate. In the isomerase reaction, S2AL is rearranged via a Mg-dependent methyl migration to produce 3-hydroxy-3-methyl-2-ketobutyrate (HMKB). In the reductase reaction, this 2-ketoacid undergoes a metal-dependent reduction by NADPH to yield (R)-2,3-dihydroxy-isovalerate. The protein is Ketol-acid reductoisomerase (NADP(+)) of Bartonella tribocorum (strain CIP 105476 / IBS 506).